Consider the following 402-residue polypeptide: NADH-quinone oxidoreductase subunit D (402 aa).

This sequence belongs to the complex I 49 kDa subunit family. In terms of assembly, NDH-1 is composed of 14 different subunits. Subunits NuoB, C, D, E, F, and G constitute the peripheral sector of the complex.

It is found in the cell inner membrane. It carries out the reaction a quinone + NADH + 5 H(+)(in) = a quinol + NAD(+) + 4 H(+)(out). In terms of biological role, NDH-1 shuttles electrons from NADH, via FMN and iron-sulfur (Fe-S) centers, to quinones in the respiratory chain. The immediate electron acceptor for the enzyme in this species is believed to be ubiquinone. Couples the redox reaction to proton translocation (for every two electrons transferred, four hydrogen ions are translocated across the cytoplasmic membrane), and thus conserves the redox energy in a proton gradient. The sequence is that of NADH-quinone oxidoreductase subunit D from Azorhizobium caulinodans (strain ATCC 43989 / DSM 5975 / JCM 20966 / LMG 6465 / NBRC 14845 / NCIMB 13405 / ORS 571).